Consider the following 240-residue polypeptide: Ubiquitin domain-containing protein 1 (240 aa).

The interval 1–48 (MGGCVGRPQGESQRSQSRASGQQRKRAGRNEPLKKERPRWKSDYPMTD) is disordered. Low complexity predominate over residues 12 to 22 (SQRSQSRASGQ). The segment covering 28–42 (GRNEPLKKERPRWKS) has biased composition (basic and acidic residues). A Ubiquitin-like domain is found at 153–228 (FQLKVRLSTG…DTSYCKPATR (76 aa)).

Its function is as follows. May be involved in the regulation of cellular senescence through a positive feedback loop with TP53. The protein is Ubiquitin domain-containing protein 1 (ubtd1) of Xenopus tropicalis (Western clawed frog).